The following is a 91-amino-acid chain: Cell division topological specificity factor (91 aa).

The protein belongs to the MinE family.

In terms of biological role, prevents the cell division inhibition by proteins MinC and MinD at internal division sites while permitting inhibition at polar sites. This ensures cell division at the proper site by restricting the formation of a division septum at the midpoint of the long axis of the cell. The polypeptide is Cell division topological specificity factor (Caldanaerobacter subterraneus subsp. tengcongensis (strain DSM 15242 / JCM 11007 / NBRC 100824 / MB4) (Thermoanaerobacter tengcongensis)).